Reading from the N-terminus, the 427-residue chain is Glutamate-1-semialdehyde 2,1-aminomutase (427 aa).

An N6-(pyridoxal phosphate)lysine modification is found at lysine 265.

Belongs to the class-III pyridoxal-phosphate-dependent aminotransferase family. HemL subfamily. In terms of assembly, homodimer. Pyridoxal 5'-phosphate serves as cofactor.

It is found in the cytoplasm. The enzyme catalyses (S)-4-amino-5-oxopentanoate = 5-aminolevulinate. Its pathway is porphyrin-containing compound metabolism; protoporphyrin-IX biosynthesis; 5-aminolevulinate from L-glutamyl-tRNA(Glu): step 2/2. The polypeptide is Glutamate-1-semialdehyde 2,1-aminomutase (Burkholderia mallei (strain NCTC 10229)).